A 91-amino-acid chain; its full sequence is CLAVATA3/ESR (CLE)-related protein 27 (91 aa).

Residues 1-35 (MTHAREWRSSLTTTLLMVILLSYMLHLFCVYSRVG) form the signal peptide. Hydroxyproline is present on residues Pro83 and Pro86. An O-linked (Ara...) hydroxyproline glycan is attached at Pro86.

It belongs to the CLV3/ESR signal peptide family. In terms of processing, the O-glycosylation (arabinosylation) of the hydroxyproline Pro-86 enhances binding affinity of the CLE27p peptide for its receptor. Mostly expressed in apex, and, to a lower extent, in roots, leaves, flowers and siliques.

It is found in the secreted. Its subcellular location is the extracellular space. In terms of biological role, extracellular signal peptide that regulates cell fate. Represses root apical meristem maintenance. The sequence is that of CLAVATA3/ESR (CLE)-related protein 27 from Arabidopsis thaliana (Mouse-ear cress).